Here is a 419-residue protein sequence, read N- to C-terminus: Probable G-protein coupled receptor 63 (419 aa).

Topologically, residues 1 to 81 (MVFSAVLTAF…AFKSLNLPLQ (81 aa)) are extracellular. N-linked (GlcNAc...) asparagine glycosylation is found at Asn-16, Asn-28, and Asn-62. A helical transmembrane segment spans residues 82 to 104 (ITLSAIMIFILFVSFLGNLVVCL). Residues 105–115 (MVYQKAAMRSA) are Cytoplasmic-facing. The helical transmembrane segment at 116–138 (INILLASLAFADMLLAVLNMPFA) threads the bilayer. The Extracellular segment spans residues 139–157 (LVTILTTRWIFGKFFCRVS). A helical membrane pass occupies residues 158–177 (AMFFWLFVIEGVAILLIISI). Residues 178 to 196 (DRFLIIVQRQDKLNPYRAK) are Cytoplasmic-facing. Residues 197–216 (VLIAVSWATSFCVAFPLAVG) traverse the membrane as a helical segment. The Extracellular segment spans residues 217-240 (NPDLQIPSRAPQCVFGYTTNPGYQ). A helical transmembrane segment spans residues 241–263 (AYVILISLISFFIPFLVILYSFM). Over 264-315 (GILNTLRHNALRIHSYPEGICLSQASKLGLMSLQRPFQMSIDMGFKTRAFTT) the chain is Cytoplasmic. Residues 316–338 (ILILFAVFIVCWAPFTTYSLVAT) form a helical membrane-spanning segment. Topologically, residues 339-352 (FSKHFYYQHNFFEI) are extracellular. Residues 353–375 (STWLLWLCYLKSALNPLIYYWRI) traverse the membrane as a helical segment. The Cytoplasmic portion of the chain corresponds to 376 to 419 (KKFHDACLDMMPKSFKFLPQLPGHTKRRIRPSAVYVCGEHRTVV).

The protein belongs to the G-protein coupled receptor 1 family. In terms of tissue distribution, expressed in brain; detected in the frontal cortex, with lower levels in the thalamus, caudate, hypothalamus and midbrain.

Its subcellular location is the cell membrane. Orphan receptor. May play a role in brain function. This is Probable G-protein coupled receptor 63 (GPR63) from Homo sapiens (Human).